Here is a 292-residue protein sequence, read N- to C-terminus: 2-methylisocitrate lyase (292 aa).

44–46 is a binding site for substrate; it reads SGA. The Mg(2+) site is built by aspartate 84 and aspartate 86. Substrate is bound by residues 121–122, arginine 156, glutamate 186, 208–210, arginine 239, and arginine 268; these read CG and NMT.

Belongs to the isocitrate lyase/PEP mutase superfamily. Methylisocitrate lyase family. In terms of assembly, homotetramer; dimer of dimers. Mg(2+) serves as cofactor.

The enzyme catalyses (2S,3R)-3-hydroxybutane-1,2,3-tricarboxylate = pyruvate + succinate. It functions in the pathway organic acid metabolism; propanoate degradation. In terms of biological role, involved in the catabolism of short chain fatty acids (SCFA) via the 2-methylcitrate cycle I (propionate degradation route). Catalyzes the thermodynamically favored C-C bond cleavage of (2R,3S)-2-methylisocitrate to yield pyruvate and succinate via an alpha-carboxy-carbanion intermediate. The sequence is that of 2-methylisocitrate lyase from Shewanella oneidensis (strain ATCC 700550 / JCM 31522 / CIP 106686 / LMG 19005 / NCIMB 14063 / MR-1).